Reading from the N-terminus, the 358-residue chain is Tyrosinase ustQ (358 aa).

Residue Asn28 is glycosylated (N-linked (GlcNAc...) asparagine). A helical membrane pass occupies residues Phe37–Val57. N-linked (GlcNAc...) asparagine glycosylation is found at Asn91 and Asn109. Cu cation is bound by residues His128 and His137. Residues Asn172 and Asn214 are each glycosylated (N-linked (GlcNAc...) asparagine). 3 residues coordinate Cu cation: His266, His270, and His292. Asn321 and Asn325 each carry an N-linked (GlcNAc...) asparagine glycan.

It belongs to the tyrosinase family. Cu(2+) serves as cofactor.

It is found in the membrane. It carries out the reaction 2 L-dopa + O2 = 2 L-dopaquinone + 2 H2O. The enzyme catalyses L-tyrosine + O2 = L-dopaquinone + H2O. It participates in mycotoxin biosynthesis. Tyrosinase; part of the gene cluster that mediates the biosynthesis of the secondary metabolite ustiloxin B, an antimitotic tetrapeptide. First, ustA is processed by the subtilisin-like endoprotease Kex2 that is outside the ustiloxin B gene cluster, at the C-terminal side of Arg-Lys, after transfer to Golgi apparatus through the endoplasmic reticulum (ER). Cleavage by KEX2 generates 16 peptides YAIG-I to YAIG-XVI. To process the precursor peptide further, at least two peptidases are necessary to cleave the N-terminal and C-terminal sides of the Tyr-Ala-Ile-Gly core peptide which serves as backbone for the synthesis of ustiloxin B, through cyclization and modification of the tyrosine with a non-protein coding amino acid, norvaline. One of the two peptidases must be the serine peptidase ustP; and the other pepdidase is probably ustH. Macrocyclization of the core peptide derived from ustA requires the tyrosinase ustQ, as well as the homologous oxidases ustYa and ustYb, and leads to the production of the first cyclization product N-desmethylustiloxin F. For the formation of N-desmethylustiloxin F, three oxidation steps are required, hydroxylation at the benzylic position, hydroxylation at either the aromatic ring of Tyr or beta-position of Ile, and oxidative cyclization. UstQ may catalyze the oxidation of a phenol moiety, whereas the ustYa and ustYb are most likely responsible for the remaining two-step oxidations. N-desmethylustiloxin F is then methylated by ustM to yield ustiloxin F which in turn substrate of the cytochrome P450 monooxygenase ustC which catalyzes the formation of S-deoxyustiloxin H. The flavoprotein monooxygenases ustF1 and ustF2 then participate in the modification of the side chain of S-deoxyustiloxin H, leading to the synthesis of an oxime intermediate, via ustiloxin H. Finally, carboxylative dehydration performed by the cysteine desulfurase-like protein ustD yields ustiloxin B. The sequence is that of Tyrosinase ustQ from Aspergillus flavus (strain ATCC 200026 / FGSC A1120 / IAM 13836 / NRRL 3357 / JCM 12722 / SRRC 167).